A 409-amino-acid chain; its full sequence is Toluene 1,2-dioxygenase system ferredoxin--NAD(+) reductase component (409 aa).

4-35 (HVAIIGNGVGGFTTAQALRAEGFEGRISLIGD) is an FAD binding site. 145 to 173 (RLLIVGGGLIGCEVATTARKLGLSVTILE) contributes to the NAD(+) binding site.

This sequence belongs to the bacterial ring-hydroxylating dioxygenase ferredoxin reductase family. In terms of assembly, this dioxygenase system consists of four proteins: the two subunits of the hydroxylase component (todC1 and todC2), a ferredoxin (TodB) and a ferredoxin reductase (TodA). Requires FAD as cofactor.

The catalysed reaction is 2 reduced [2Fe-2S]-[ferredoxin] + NAD(+) + H(+) = 2 oxidized [2Fe-2S]-[ferredoxin] + NADH. The protein operates within xenobiotic degradation; toluene degradation. Its function is as follows. Part of the electron transfer component of toluene 1,2-dioxygenase, transfers electrons from ferredoxin (TodB) to NADH. In Pseudomonas putida (Arthrobacter siderocapsulatus), this protein is Toluene 1,2-dioxygenase system ferredoxin--NAD(+) reductase component (todA).